The following is a 720-amino-acid chain: Serine/threonine-protein kinase KIN82 (720 aa).

2 stretches are compositionally biased toward polar residues: residues Met1–Leu13 and Phe99–Glu116. Disordered regions lie at residues Met1–Ser20 and Phe99–Ile128. The residue at position 203 (Ser203) is a Phosphoserine. A compositionally biased stretch (low complexity) spans Ser230 to Pro241. The tract at residues Ser230–Pro257 is disordered. The segment covering Ser244 to Gln255 has biased composition (basic and acidic residues). Residues Phe324–Phe602 form the Protein kinase domain. ATP-binding positions include Leu330–Val338 and Lys353. The active-site Proton acceptor is the Asp449.

This sequence belongs to the protein kinase superfamily. Ser/Thr protein kinase family. KIN82 subfamily.

It carries out the reaction L-seryl-[protein] + ATP = O-phospho-L-seryl-[protein] + ADP + H(+). The enzyme catalyses L-threonyl-[protein] + ATP = O-phospho-L-threonyl-[protein] + ADP + H(+). Flippase activator that phosphorylates DFN1 and DFN2 and which is involved in the generation of phospholipid asymmetry in membranes by the inward translocation of phospholipids. The polypeptide is Serine/threonine-protein kinase KIN82 (KIN82) (Saccharomyces cerevisiae (strain ATCC 204508 / S288c) (Baker's yeast)).